We begin with the raw amino-acid sequence, 896 residues long: FHIP family protein C05D11.8 (896 aa).

The tract at residues serine 823–aspartate 865 is disordered. The span at leucine 853 to aspartate 865 shows a compositional bias: basic and acidic residues.

The protein belongs to the FHIP family.

The sequence is that of FHIP family protein C05D11.8 from Caenorhabditis elegans.